We begin with the raw amino-acid sequence, 148 residues long: Transcriptional regulator MraZ (148 aa).

2 consecutive SpoVT-AbrB domains span residues 5-53 (ETAI…AEKE) and 82-125 (SAVL…SEQA).

The protein belongs to the MraZ family. Forms oligomers.

It is found in the cytoplasm. The protein resides in the nucleoid. In Xanthomonas axonopodis pv. citri (strain 306), this protein is Transcriptional regulator MraZ.